The primary structure comprises 259 residues: UPF0246 protein NMA1114 (259 aa).

It belongs to the UPF0246 family.

This chain is UPF0246 protein NMA1114, found in Neisseria meningitidis serogroup A / serotype 4A (strain DSM 15465 / Z2491).